The following is a 395-amino-acid chain: S-adenosylmethionine synthase (395 aa).

Residue Glu-10 coordinates Mg(2+). His-16 lines the ATP pocket. K(+) is bound at residue Glu-44. L-methionine-binding residues include Glu-57 and Gln-100. ATP contacts are provided by residues 168-170 (DGK), 236-239 (SGRF), 253-254 (RK), Ala-270, Lys-274, and Lys-278. Lys-278 is a binding site for L-methionine.

It belongs to the AdoMet synthase family. Homotetramer. It depends on Mn(2+) as a cofactor. Requires Mg(2+) as cofactor. The cofactor is Co(2+). K(+) serves as cofactor.

It localises to the cytoplasm. It catalyses the reaction L-methionine + ATP + H2O = S-adenosyl-L-methionine + phosphate + diphosphate. The protein operates within amino-acid biosynthesis; S-adenosyl-L-methionine biosynthesis; S-adenosyl-L-methionine from L-methionine: step 1/1. Functionally, catalyzes the formation of S-adenosylmethionine from methionine and ATP. The reaction comprises two steps that are both catalyzed by the same enzyme: formation of S-adenosylmethionine (AdoMet) and triphosphate, and subsequent hydrolysis of the triphosphate. The sequence is that of S-adenosylmethionine synthase (METK) from Populus deltoides (Eastern poplar).